The following is a 71-amino-acid chain: Cytochrome c oxidase subunit 7, mitochondrial (71 aa).

Residues 1–35 lie on the Mitochondrial matrix side of the membrane; that stretch reads MPGLVNAPNHVPEKQRYYQQAFKNHTRLWKIGPRS. The chain crosses the membrane as a helical span at residues 36 to 58; sequence GIIMTTFNIAMWGTFGASMYAMS. Over 59 to 71 the chain is Mitochondrial intermembrane; the sequence is RKVLGYNTWFSED.

This sequence belongs to the cytochrome c oxidase VIIa family. In terms of assembly, component of the cytochrome c oxidase (complex IV, CIV), a multisubunit enzyme composed of 11 subunits. The complex is composed of a catalytic core of 3 subunits Cox1, Cox2 and Cox3, encoded in the mitochondrial DNA, and 8 supernumerary subunits Cox4, Cox5a/Cox5, Cox6, Cox7, Cox8, Cox7a/Cox9, Cox6b/Cox12 and Cox6a/Cox13, which are encoded in the nuclear genome. The complex exists as a monomer or a dimer and forms respiratory supercomplexes (SCs) in the inner mitochondrial membrane with NADH-ubiquinone oxidoreductase (complex I, CI) and ubiquinol-cytochrome c oxidoreductase (cytochrome b-c1 complex, complex III, CIII), resulting in various different assemblies (supercomplexes I(1)IV(1), I(1)III(3)IV(2), III(2)IV(1) and III(2)IV(2) as well as larger supercomplexes of compositions like I(1)III(2)IV(5-6)).

The protein resides in the mitochondrion inner membrane. The protein operates within energy metabolism; oxidative phosphorylation. Functionally, component of the cytochrome c oxidase, the last enzyme in the mitochondrial electron transport chain which drives oxidative phosphorylation. The respiratory chain contains 3 multisubunit complexes succinate dehydrogenase (complex II, CII), ubiquinol-cytochrome c oxidoreductase (cytochrome b-c1 complex, complex III, CIII) and cytochrome c oxidase (complex IV, CIV), that cooperate to transfer electrons derived from NADH and succinate to molecular oxygen, creating an electrochemical gradient over the inner membrane that drives transmembrane transport and the ATP synthase. Cytochrome c oxidase is the component of the respiratory chain that catalyzes the reduction of oxygen to water. Electrons originating from reduced cytochrome c in the intermembrane space (IMS) are transferred via the dinuclear copper A center (CU(A)) of Cox2 and heme A of Cox1 to the active site in Cox1, a binuclear center (BNC) formed by heme A3 and copper B (CU(B)). The BNC reduces molecular oxygen to 2 water molecules using 4 electrons from cytochrome c in the IMS and 4 protons from the mitochondrial matrix. The chain is Cytochrome c oxidase subunit 7, mitochondrial from Neurospora crassa (strain ATCC 24698 / 74-OR23-1A / CBS 708.71 / DSM 1257 / FGSC 987).